Here is a 312-residue protein sequence, read N- to C-terminus: Olfactory receptor 51B6 (312 aa).

The Extracellular segment spans residues methionine 1–histidine 23. Residue asparagine 4 is glycosylated (N-linked (GlcNAc...) asparagine). The helical transmembrane segment at tryptophan 24–leucine 44 threads the bilayer. Over phenylalanine 45–asparagine 52 the chain is Cytoplasmic. Residues leucine 53–leucine 73 form a helical membrane-spanning segment. At threonine 74–serine 97 the chain is on the extracellular side. Cysteine 95 and cysteine 187 are joined by a disulfide. A helical membrane pass occupies residues glutamine 98 to tyrosine 118. The Cytoplasmic portion of the chain corresponds to aspartate 119–threonine 137. A helical membrane pass occupies residues glutamine 138–valine 158. Residues valine 159–arginine 194 are Extracellular-facing. Residues leucine 195–serine 215 traverse the membrane as a helical segment. Topologically, residues tyrosine 216–alanine 235 are cytoplasmic. The chain crosses the membrane as a helical span at residues leucine 236–leucine 256. Residues threonine 257 to histidine 271 are Extracellular-facing. The helical transmembrane segment at isoleucine 272–isoleucine 292 threads the bilayer. Residues lysine 293–alanine 312 are Cytoplasmic-facing.

Belongs to the G-protein coupled receptor 1 family.

The protein localises to the cell membrane. Its function is as follows. Odorant receptor. The chain is Olfactory receptor 51B6 (OR51B6) from Homo sapiens (Human).